Here is a 280-residue protein sequence, read N- to C-terminus: uncharacterized protein (280 aa).

Helical transmembrane passes span 46-66, 81-101, 114-134, 137-157, 170-190, and 225-245; these read LIFLLALPFLTLPFDSYFVCT, IACSYFVFPLISYQIWCFLIP, FFYLSGSCFFLFLFLTFSWVV, VWHFLYFVGATSTNSLMIKLQ, ILFISSVCSQVPVIVICLLEL, and IVACFLISLIIELAIFVALIV. The interval 258–280 is disordered; that stretch reads ESGSIEKKNKSSPPPRTWQSNYQ.

It belongs to the TatC family.

The protein resides in the mitochondrion membrane. This is an uncharacterized protein from Arabidopsis thaliana (Mouse-ear cress).